The primary structure comprises 259 residues: Imidazole glycerol phosphate synthase subunit HisF (259 aa).

Residues aspartate 11 and aspartate 130 contribute to the active site.

It belongs to the HisA/HisF family. Heterodimer of HisH and HisF.

It localises to the cytoplasm. It catalyses the reaction 5-[(5-phospho-1-deoxy-D-ribulos-1-ylimino)methylamino]-1-(5-phospho-beta-D-ribosyl)imidazole-4-carboxamide + L-glutamine = D-erythro-1-(imidazol-4-yl)glycerol 3-phosphate + 5-amino-1-(5-phospho-beta-D-ribosyl)imidazole-4-carboxamide + L-glutamate + H(+). It functions in the pathway amino-acid biosynthesis; L-histidine biosynthesis; L-histidine from 5-phospho-alpha-D-ribose 1-diphosphate: step 5/9. Its function is as follows. IGPS catalyzes the conversion of PRFAR and glutamine to IGP, AICAR and glutamate. The HisF subunit catalyzes the cyclization activity that produces IGP and AICAR from PRFAR using the ammonia provided by the HisH subunit. The sequence is that of Imidazole glycerol phosphate synthase subunit HisF from Variovorax paradoxus (strain S110).